A 95-amino-acid chain; its full sequence is Large ribosomal subunit protein bL27 (95 aa).

The propeptide occupies 1-10 (MRFILNLQFF).

The protein belongs to the bacterial ribosomal protein bL27 family. The N-terminus is cleaved by ribosomal processing cysteine protease Prp.

The polypeptide is Large ribosomal subunit protein bL27 (Mesoplasma florum (strain ATCC 33453 / NBRC 100688 / NCTC 11704 / L1) (Acholeplasma florum)).